The following is a 288-amino-acid chain: MLKSYLSITKPGIIFGNLISVAAGFFLAAKSEPASLMLFLTTLAGVGLVIASGCVVNNIFDRDIDQKMARTQNRETVKGNINIDVAFVYALAMLLLGTALLFQLVNPLSAVVVLLGYVYYVFFYTMWYKRNSVYGTLVGSISGAVPPLVGYLAVTNFISLEAILLFTMFCLWQMPHSYAIAMFRMQDYREAGIPVLPVKDGIHKAHRHMKAYVVAFGAVSLGLFLLGEAGYEYLAVAAVVCLMWTKVTFRSIDESNYVVWSKSVFKVSLLVVMGISGVLGVELIPLAL.

The next 9 helical transmembrane spans lie at 8–28 (ITKP…FFLA), 36–56 (LMLF…GCVV), 85–105 (VAFV…FQLV), 108–128 (LSAV…TMWY), 131–151 (NSVY…LVGY), 152–172 (LAVT…FCLW), 211–231 (AYVV…EAGY), 233–252 (YLAV…FRSI), and 267–287 (VSLL…IPLA).

Belongs to the UbiA prenyltransferase family. Protoheme IX farnesyltransferase subfamily.

Its subcellular location is the cell inner membrane. The catalysed reaction is heme b + (2E,6E)-farnesyl diphosphate + H2O = Fe(II)-heme o + diphosphate. It functions in the pathway porphyrin-containing compound metabolism; heme O biosynthesis; heme O from protoheme: step 1/1. Its function is as follows. Converts heme B (protoheme IX) to heme O by substitution of the vinyl group on carbon 2 of heme B porphyrin ring with a hydroxyethyl farnesyl side group. The polypeptide is Protoheme IX farnesyltransferase 2 (Vibrio parahaemolyticus serotype O3:K6 (strain RIMD 2210633)).